Consider the following 471-residue polypeptide: ATP synthase subunit beta (471 aa).

153 to 160 is a binding site for ATP; that stretch reads GGAGVGKT.

It belongs to the ATPase alpha/beta chains family. As to quaternary structure, F-type ATPases have 2 components, CF(1) - the catalytic core - and CF(0) - the membrane proton channel. CF(1) has five subunits: alpha(3), beta(3), gamma(1), delta(1), epsilon(1). CF(0) has four main subunits: a(1), b(1), b'(1) and c(9-12).

The protein localises to the cell membrane. It carries out the reaction ATP + H2O + 4 H(+)(in) = ADP + phosphate + 5 H(+)(out). Functionally, produces ATP from ADP in the presence of a proton gradient across the membrane. The catalytic sites are hosted primarily by the beta subunits. The sequence is that of ATP synthase subunit beta from Roseiflexus sp. (strain RS-1).